The following is a 248-amino-acid chain: MALLEICCYSMECALTAQQNGADRVELCAAPKEGGLTPSLGVLKSVRQRVTIPVHPIIRPRGGDFCYSDGEFAAILEDVRTVRELGFPGLVTGVLDVDGNVDMPRMEKIMAAAGPLAVTFHRAFDMCANPLYTLNNLAELGIARVLTSGQKSDALQGLSKIMELIAHRDAPIIMAGAGVRAENLHHFLDAGVLEVHSSAGAWQASPMRYRNQGLSMSSDEHADEYSRYIVDGAAVAEMKGIIERHQAK.

This sequence belongs to the CutC family. As to quaternary structure, homodimer.

The protein localises to the cytoplasm. This chain is PF03932 family protein CutC, found in Escherichia coli O139:H28 (strain E24377A / ETEC).